A 193-amino-acid chain; its full sequence is Ribosome maturation factor RimM (193 aa).

Residues 97-172 form the PRC barrel domain; the sequence is DDEFYLTDLV…LILADPPALV (76 aa). The tract at residues 168–193 is disordered; the sequence is PPALVGDHEGPEEKGLDENEELGDRD. The span at 173-193 shows a compositional bias: basic and acidic residues; the sequence is GDHEGPEEKGLDENEELGDRD.

It belongs to the RimM family. As to quaternary structure, binds ribosomal protein uS19.

It is found in the cytoplasm. In terms of biological role, an accessory protein needed during the final step in the assembly of 30S ribosomal subunit, possibly for assembly of the head region. Essential for efficient processing of 16S rRNA. May be needed both before and after RbfA during the maturation of 16S rRNA. It has affinity for free ribosomal 30S subunits but not for 70S ribosomes. The polypeptide is Ribosome maturation factor RimM (Caulobacter vibrioides (strain ATCC 19089 / CIP 103742 / CB 15) (Caulobacter crescentus)).